A 342-amino-acid chain; its full sequence is N-acetyl-gamma-glutamyl-phosphate reductase (342 aa).

Cys-146 is a catalytic residue.

Belongs to the NAGSA dehydrogenase family. Type 1 subfamily.

Its subcellular location is the cytoplasm. The catalysed reaction is N-acetyl-L-glutamate 5-semialdehyde + phosphate + NADP(+) = N-acetyl-L-glutamyl 5-phosphate + NADPH + H(+). It participates in amino-acid biosynthesis; L-arginine biosynthesis; N(2)-acetyl-L-ornithine from L-glutamate: step 3/4. Functionally, catalyzes the NADPH-dependent reduction of N-acetyl-5-glutamyl phosphate to yield N-acetyl-L-glutamate 5-semialdehyde. The sequence is that of N-acetyl-gamma-glutamyl-phosphate reductase from Thermobifida fusca (strain YX).